The following is a 797-amino-acid chain: Plakophilin-3 (797 aa).

The segment at 56 to 82 is disordered; that stretch reads QLGQQPRHNGAAEPEPEAETARGTSRG. Arg81 carries the omega-N-methylarginine modification. A phosphoserine mark is found at Ser123, Ser180, and Ser183. The residue at position 195 (Tyr195) is a Phosphotyrosine; by SRC. Residues Ser238 and Ser240 each carry the phosphoserine modification. Thr250 carries the phosphothreonine modification. Arg261 carries the omega-N-methylarginine modification. The interval 283 to 288 is required for interaction with SFN; sequence SLSLSL. Ser285, Ser313, Ser314, and Ser331 each carry phosphoserine. The interval 294-724 is required for interaction with GSK3B; the sequence is LPDVHGFNSY…AEVLVNIIAV (431 aa). ARM repeat units follow at residues 305–348, 351–390, 393–432, 449–487, 491–536, 596–637, 645–684, and 689–730; these read SHRT…HKCY, AAAKKQARSLQAVPRLVKLFNHANQEVQRHATGAMRNLIY, ADNKLALVEENGIFELLRTLREQDDELRKNVTGILWNLSS, TDLVLSPLSGAGGPPLIQQNASEAEIFYNATGFLRNLSS, ATRQ…NLSY, PKGL…NITA, VLSRLALEQERILNPLLDRVRTADHHQLRSLTGLIRNLSR, and KDEM…NLVV. The interval 516–797 is required for binding to PKP2 mRNA; that stretch reads AGKCEDKSVE…GYRKEDFLGP (282 aa).

The protein belongs to the beta-catenin family. Found in a complex composed of CDH1, RAP1A and PKP3; PKP3 acts as a scaffold protein within the complex, the complex is required for CDH1 localization to mature desmosome cell junctions. Interacts with FXR1; the interaction facilitates the binding of PKP3 to PKP2 mRNA. Interacts (via ARM repeats) with GSK3B; the interaction may be involved in PKP3 protein degradation. Interacts with hyperphosphorylated and hypophosphorylated RB1; the interaction inhibits RB1 interaction with and repression of the transcription factor E2F1, potentially via sequestering RB1 to the cytoplasm. Interacts with CDKN1A; the interaction sequesters CDKN1A to the cytoplasm thereby repressing its role as an inhibitor of CDK4- and CDK6-driven RB1 phosphorylation. Interacts (via N-terminus) with SFN; the interaction maintains the cytoplasmic pool of PKP3, facilitates PKP3 exchange at desmosomes and restricts PKP3 localization to existing desmosome cell junctions. Interacts (via N-terminus) with JUP; the interaction is required for PKP3 localization to desmosome cell-cell junctions. Post-translationally, phosphorylated at Ser-285 when localized to the cytoplasm, PKP3 at desmosome cell junctions is not phosphorylated. Phosphorylation at Try-195 by SRC is induced by reactive oxygen species and potentially acts as a release mechanism from desmosome cell-cell junctions. Expressed in the epidermis of the skin, in squamous non-cornifying epithelial cells in the vagina, single layer epithelia of the duodenum and pancreas acini and non-epithelial dendritic reticulum cells of lymph node follicles (at protein level). As to expression, expressed in the oral cavity mucosa, epidermis and small intestine epithelium (at protein level). In terms of tissue distribution, expressed in the oral cavity mucosa and epithelial cells of the crypts and villi in the small intestine (at protein level). Expressed in the epidermis with more abundant expression found in the basal and low spinous cells (at protein level).

The protein localises to the nucleus. Its subcellular location is the cell junction. The protein resides in the desmosome. It localises to the cytoplasm. It is found in the cell membrane. The protein localises to the adherens junction. Functionally, a component of desmosome cell-cell junctions which are required for positive regulation of cellular adhesion. Required for the localization of DSG2, DSP and PKP2 to mature desmosome junctions. May also play a role in the maintenance of DSG3 protein abundance in keratinocytes. Required for the formation of DSP-containing desmosome precursors in the cytoplasm during desmosome assembly. Also regulates the accumulation of CDH1 to mature desmosome junctions, via cAMP-dependent signaling and its interaction with activated RAP1A. Positively regulates the stabilization of PKP2 mRNA and therefore protein abundance, via its interaction with FXR1, may also regulate the protein abundance of DSP via the same mechanism. May also regulate the protein abundance of the desmosome component PKP1. Required for the organization of desmosome junctions at intercellular borders between basal keratinocytes of the epidermis, as a result plays a role in maintenance of the dermal barrier and regulation of the dermal inflammatory response. Required during epidermal keratinocyte differentiation for cell adherence at tricellular cell-cell contacts, via regulation of the timely formation of adherens junctions and desmosomes in a calcium-dependent manner, and may also play a role in the organization of the intracellular actin fiber belt. Acts as a negative regulator of the inflammatory response in hematopoietic cells of the skin and intestine, via modulation of proinflammatory cytokine production. Important for epithelial barrier maintenance in the intestine to reduce intestinal permeability, thereby plays a role in protection from intestinal-derived endotoxemia. Required for the development of hair follicles, via a role in the regulation of inner root sheaf length, correct alignment and anterior-posterior polarity of hair follicles. Promotes proliferation and cell-cycle G1/S phase transition of keratinocytes. Promotes E2F1-driven transcription of G1/S phase promoting genes by acting to release E2F1 from its inhibitory interaction with RB1, via sequestering RB1 and CDKN1A to the cytoplasm and thereby increasing CDK4- and CDK6-driven phosphorylation of RB1. May act as a scaffold protein to facilitate MAPK phosphorylation of RPS6KA protein family members and subsequently promote downstream EGFR signaling. May play a role in the positive regulation of transcription of Wnt-mediated TCF-responsive target genes. The chain is Plakophilin-3 (PKP3) from Homo sapiens (Human).